The primary structure comprises 330 residues: Probable deoxyhypusine synthase (330 aa).

The tract at residues 1–25 (MTGDDADETHENVVPGSDEDLDTPD) is disordered. Catalysis depends on Lys298, which acts as the Nucleophile.

It belongs to the deoxyhypusine synthase family. NAD(+) is required as a cofactor.

It catalyses the reaction [eIF5A protein]-L-lysine + spermidine = [eIF5A protein]-deoxyhypusine + propane-1,3-diamine. It participates in protein modification; eIF5A hypusination. Functionally, catalyzes the NAD-dependent oxidative cleavage of spermidine and the subsequent transfer of the butylamine moiety of spermidine to the epsilon-amino group of a specific lysine residue of the eIF-5A precursor protein to form the intermediate deoxyhypusine residue. The chain is Probable deoxyhypusine synthase from Halobacterium salinarum (strain ATCC 29341 / DSM 671 / R1).